Here is a 551-residue protein sequence, read N- to C-terminus: Prunin 1 Pru du 6 (551 aa).

A signal peptide spans 1-20 (MAKAFVFSLCLLLVFNGCLA). Intrachain disulfides connect Cys-32-Cys-65 and Cys-108-Cys-374. Residues 37–312 (LQAREPDNRI…ALNVNEETAR (276 aa)) enclose the Cupin type-1 1 domain. Disordered regions lie at residues 111 to 194 (TFEE…QKTR), 238 to 293 (NPRK…NVFS), and 329 to 360 (GNLD…RQQQ). Low complexity-rich tracts occupy residues 114–124 (ESQQSSQQGRQ), 132–148 (QQQQ…QQEQ), and 168–185 (QEQQ…QQFR). Arg-194 provides a ligand contact to Ca(2+). The segment covering 254 to 275 (QQGQSQPRQQGEQGRPGQHQQP) has biased composition (low complexity). Over residues 282–293 (QEQQGNGNNVFS) the composition is skewed to polar residues. A compositionally biased stretch (basic and acidic residues) spans 339 to 350 (GRQEREHEERQQ). Positions 351–360 (EQLQQERQQQ) are enriched in low complexity. Positions 367–372 (NGLEET) match the NGXEET; peptidase recognition motif motif. A Cupin type-1 2 domain is found at 380–529 (ENIGNPERAD…AYQISREQAR (150 aa)).

The protein belongs to the 11S seed storage protein (globulins) family. As to quaternary structure, hexamer of two trimers; each subunit is composed of an acidic and a basic chain derived from a single precursor and linked by a disulfide bond. Post-translationally, proteolytically processed from a single precursor to produce an acidic and a basic chain that are linked by a disulfide bond. As to expression, expressed in seed (at protein level). Expressed in seed.

Functionally, seed storage protein. The sequence is that of Prunin 1 Pru du 6 from Prunus dulcis (Almond).